We begin with the raw amino-acid sequence, 297 residues long: Small ribosomal subunit biogenesis GTPase RsgA (297 aa).

In terms of domain architecture, CP-type G spans Arg65–Ile223. GTP-binding positions include Thr114–Asp117 and Gly166–Thr174. Cys247, Cys252, His254, and Cys260 together coordinate Zn(2+).

The protein belongs to the TRAFAC class YlqF/YawG GTPase family. RsgA subfamily. In terms of assembly, monomer. Associates with 30S ribosomal subunit, binds 16S rRNA. The cofactor is Zn(2+).

Its subcellular location is the cytoplasm. Its function is as follows. One of several proteins that assist in the late maturation steps of the functional core of the 30S ribosomal subunit. Helps release RbfA from mature subunits. May play a role in the assembly of ribosomal proteins into the subunit. Circularly permuted GTPase that catalyzes slow GTP hydrolysis, GTPase activity is stimulated by the 30S ribosomal subunit. This chain is Small ribosomal subunit biogenesis GTPase RsgA, found in Enterococcus faecalis (strain ATCC 700802 / V583).